The following is a 531-amino-acid chain: T-complex protein 1 subunit zeta (531 aa).

Position 2 is an N-acetylalanine (A2). At K5 the chain carries N6-acetyllysine. G39 contributes to the ADP binding site. Residue G39 coordinates ATP. D90 is a Mg(2+) binding site. Positions 91, 92, 93, 94, 158, and 159 each coordinate ADP. ATP-binding residues include G91, T92, and T93. N6-acetyllysine is present on K199. Position 205 is a phosphoserine (S205). Residue K251 forms a Glycyl lysine isopeptide (Lys-Gly) (interchain with G-Cter in SUMO2) linkage. An N6-acetyllysine mark is found at K287, K365, K377, and K388. A411 is a binding site for ADP. Residues A411, G412, D496, and K501 each contribute to the ATP site. An ADP-binding site is contributed by D496.

This sequence belongs to the TCP-1 chaperonin family. Component of the chaperonin-containing T-complex (TRiC), a hexadecamer composed of two identical back-to-back stacked rings enclosing a protein folding chamber. Each ring is made up of eight different subunits: TCP1/CCT1, CCT2, CCT3, CCT4, CCT5, CCT6A/CCT6, CCT7, CCT8. Interacts with PACRG.

The protein resides in the cytoplasm. The catalysed reaction is ATP + H2O = ADP + phosphate + H(+). Functionally, component of the chaperonin-containing T-complex (TRiC), a molecular chaperone complex that assists the folding of actin, tubulin and other proteins upon ATP hydrolysis. The TRiC complex mediates the folding of WRAP53/TCAB1, thereby regulating telomere maintenance. The sequence is that of T-complex protein 1 subunit zeta (CCT6A) from Bos taurus (Bovine).